The sequence spans 1890 residues: Putative aminopeptidase-2 (1890 aa).

An N-terminal signal peptide occupies residues 1 to 20 (MRRKLLLLLCFIGLFSLIST). Asn110 carries N-linked (GlcNAc...) asparagine glycosylation. Substrate is bound by residues Glu220 and 354–358 (GAMEN). His390 lines the Zn(2+) pocket. Glu391 (proton acceptor) is an active-site residue. Positions 394 and 413 each coordinate Zn(2+). N-linked (GlcNAc...) asparagine glycosylation is found at Asn534, Asn581, Asn785, Asn803, Asn914, Asn1024, and Asn1094. Residue Glu1143 coordinates substrate. A glycan (N-linked (GlcNAc...) asparagine) is linked at Asn1245. 1280 to 1284 (GAMEN) is a binding site for substrate. His1316 contributes to the Zn(2+) binding site. Glu1317 acts as the Proton acceptor in catalysis. Zn(2+)-binding residues include His1320 and Glu1339. N-linked (GlcNAc...) asparagine glycosylation is found at Asn1451, Asn1521, Asn1826, and Asn1841.

This sequence belongs to the peptidase M1 family. The cofactor is Zn(2+).

In terms of biological role, putative aminopeptidase which plays a role in oocyte maturation. In Caenorhabditis elegans, this protein is Putative aminopeptidase-2.